The sequence spans 142 residues: Hemoglobin subunit beta (142 aa).

A Globin domain is found at 3-142; that stretch reads KLSEDQEHYI…VAEALSSNYH (140 aa). The heme b site is built by His60 and His89.

The protein belongs to the globin family. As to quaternary structure, heterotetramer of two alpha chains and two beta chains. In terms of tissue distribution, red blood cells.

Its function is as follows. Involved in oxygen transport from gills to the various peripheral tissues. The protein is Hemoglobin subunit beta (HBB) of Hemitrygon akajei (Red stingray).